Reading from the N-terminus, the 327-residue chain is Ribosomal RNA small subunit methyltransferase H (327 aa).

Residues 36–38 (GGH), Asp55, Leu89, Asp103, and Gln110 each bind S-adenosyl-L-methionine. The tract at residues 286–327 (GAEPASDTEIEQNARAGSVRLRAAERTAAEPGRAHNPTGGVR) is disordered.

The protein belongs to the methyltransferase superfamily. RsmH family.

Its subcellular location is the cytoplasm. The enzyme catalyses cytidine(1402) in 16S rRNA + S-adenosyl-L-methionine = N(4)-methylcytidine(1402) in 16S rRNA + S-adenosyl-L-homocysteine + H(+). Its function is as follows. Specifically methylates the N4 position of cytidine in position 1402 (C1402) of 16S rRNA. The chain is Ribosomal RNA small subunit methyltransferase H from Parafrankia sp. (strain EAN1pec).